Here is a 230-residue protein sequence, read N- to C-terminus: 5'-methylthioadenosine/S-adenosylhomocysteine nucleosidase (230 aa).

Glutamate 12 acts as the Proton acceptor in catalysis. Substrate-binding positions include glycine 78, isoleucine 152, and 173–174 (ME). The Proton donor role is filled by aspartate 197.

It belongs to the PNP/UDP phosphorylase family. MtnN subfamily.

It catalyses the reaction S-adenosyl-L-homocysteine + H2O = S-(5-deoxy-D-ribos-5-yl)-L-homocysteine + adenine. The enzyme catalyses S-methyl-5'-thioadenosine + H2O = 5-(methylsulfanyl)-D-ribose + adenine. The catalysed reaction is 5'-deoxyadenosine + H2O = 5-deoxy-D-ribose + adenine. It functions in the pathway amino-acid biosynthesis; L-methionine biosynthesis via salvage pathway; S-methyl-5-thio-alpha-D-ribose 1-phosphate from S-methyl-5'-thioadenosine (hydrolase route): step 1/2. Its function is as follows. Catalyzes the irreversible cleavage of the glycosidic bond in both 5'-methylthioadenosine (MTA) and S-adenosylhomocysteine (SAH/AdoHcy) to adenine and the corresponding thioribose, 5'-methylthioribose and S-ribosylhomocysteine, respectively. Also cleaves 5'-deoxyadenosine, a toxic by-product of radical S-adenosylmethionine (SAM) enzymes, into 5-deoxyribose and adenine. This is 5'-methylthioadenosine/S-adenosylhomocysteine nucleosidase from Haemophilus influenzae (strain 86-028NP).